A 229-amino-acid chain; its full sequence is Zinc finger matrin-type protein 4 (229 aa).

Matrin-type zinc fingers lie at residues 14–44 (SYCKVCSAQLISESQRVAHYESRKHASKVRL) and 72–106 (DKNKCCTLCNMSFTSAVVADSHYQGKIHAKRLKLL). The interval 116–135 (TATPLSPLKPPRMDTAPVVA) is disordered. 2 consecutive Matrin-type zinc fingers follow at residues 145–175 (RYCGLCAAWFNNPLMAQQHYDGKKHKKNAAR) and 198–228 (YRCTICSVSLNSIEQYHAHLKGSKHQTNLKN).

The protein localises to the nucleus. The protein is Zinc finger matrin-type protein 4 (ZMAT4) of Homo sapiens (Human).